We begin with the raw amino-acid sequence, 449 residues long: Maltose-6'-phosphate glucosidase (449 aa).

Residue 6–72 participates in NAD(+) binding; sequence FSIVIAGGGS…PDIEFAATTD (67 aa). Residues Arg-95 and Asn-149 each contribute to the substrate site. Mn(2+) is bound at residue Cys-171. Asp-172 functions as the Proton donor in the catalytic mechanism. Residue His-202 coordinates Mn(2+). Tyr-265 serves as the catalytic Proton acceptor. Residue Arg-285 coordinates substrate.

Belongs to the glycosyl hydrolase 4 family. As to quaternary structure, homotetramer. Mn(2+) is required as a cofactor. Fe(2+) serves as cofactor. Requires Co(2+) as cofactor. It depends on Ni(2+) as a cofactor. The cofactor is NAD(+).

The enzyme catalyses alpha-maltose 6'-phosphate + H2O = D-glucose 6-phosphate + D-glucose. Cellobiose-6'-phosphate and 6-phospho-beta-D-glucopyranoside are not substrates but competitive inhibitors of GlvA. Hydrolyzes maltose-6'-phosphate and trehalose-6'-phosphate. Is involved in the catabolism of alpha-glycosides accumulated via a phosphoenolpyruvate-dependent maltose phosphotransferase system (PEP-PTS). Is also able to significantly catalyze the hydrolysis of both 6-phospho-alpha- and 6-phospho-beta-glucosides containing activated leaving groups such as p-nitrophenol and does so with retention and inversion, respectively, of the substrate anomeric configuration. This is Maltose-6'-phosphate glucosidase (glvA) from Bacillus subtilis (strain 168).